We begin with the raw amino-acid sequence, 122 residues long: Large ribosomal subunit protein uL14c (122 aa).

Belongs to the universal ribosomal protein uL14 family. In terms of assembly, part of the 50S ribosomal subunit.

It is found in the plastid. Its subcellular location is the chloroplast. Its function is as follows. Binds to 23S rRNA. This is Large ribosomal subunit protein uL14c from Jasminum nudiflorum (Winter jasmine).